A 150-amino-acid chain; its full sequence is Large ribosomal subunit protein bL9 (150 aa).

It belongs to the bacterial ribosomal protein bL9 family.

Binds to the 23S rRNA. The protein is Large ribosomal subunit protein bL9 of Halorhodospira halophila (strain DSM 244 / SL1) (Ectothiorhodospira halophila (strain DSM 244 / SL1)).